A 638-amino-acid chain; its full sequence is Signal recognition particle receptor subunit alpha (638 aa).

Disordered stretches follow at residues 129–205 (KIRA…VELS), 218–245 (IQKH…KKAP), and 262–315 (SAPT…ATKG). 2 stretches are compositionally biased toward basic and acidic residues: residues 137 to 146 (KKFEDSEKAK) and 153 to 165 (IETR…EKAK). Position 177 is a phosphoserine (Ser-177). The span at 218 to 239 (IQKHGRGLEKSSKSTKSDAPKE) shows a compositional bias: basic and acidic residues. The residue at position 284 (Thr-284) is a Phosphothreonine. Phosphoserine is present on residues Ser-296, Ser-297, and Ser-298. Over residues 304–314 (AQNASKPSATK) the composition is skewed to polar residues. The segment at 419 to 636 (YVVTFCGVNG…NAKAVVAALM (218 aa)) is NG domain. 425–432 (GVNGVGKS) is a GTP binding site. Ser-473 carries the phosphoserine modification. 520–524 (DTAGR) provides a ligand contact to GTP. Thr-578 bears the Phosphothreonine mark. 588-591 (TKFD) lines the GTP pocket.

It belongs to the GTP-binding SRP family. As to quaternary structure, heterodimer with SRPRB. Interacts with the signal recognition particle (SRP) complex subunit SRP54.

It is found in the endoplasmic reticulum membrane. Functionally, component of the SRP (signal recognition particle) receptor. Ensures, in conjunction with the signal recognition particle, the correct targeting of the nascent secretory proteins to the endoplasmic reticulum membrane system. Forms a guanosine 5'-triphosphate (GTP)-dependent complex with the SRP subunit SRP54. SRP receptor compaction and GTPase rearrangement drive SRP-mediated cotranslational protein translocation into the ER. In Canis lupus familiaris (Dog), this protein is Signal recognition particle receptor subunit alpha.